We begin with the raw amino-acid sequence, 156 residues long: Large ribosomal subunit protein uL22c (156 aa).

Belongs to the universal ribosomal protein uL22 family. In terms of assembly, part of the 50S ribosomal subunit.

It localises to the plastid. It is found in the chloroplast. In terms of biological role, this protein binds specifically to 23S rRNA. Its function is as follows. The globular domain of the protein is located near the polypeptide exit tunnel on the outside of the subunit, while an extended beta-hairpin is found that lines the wall of the exit tunnel in the center of the 70S ribosome. The polypeptide is Large ribosomal subunit protein uL22c (rpl22) (Buxus microphylla (Littleleaf boxwood)).